We begin with the raw amino-acid sequence, 491 residues long: Calcium/calmodulin-dependent protein kinase type II delta 1 chain (491 aa).

One can recognise a Protein kinase domain in the interval 13–271 (YQLYEELGKG…AAEALKHPWI (259 aa)). ATP contacts are provided by residues 19-27 (LGKGAFSVV) and Lys-42. Catalysis depends on Asp-135, which acts as the Proton acceptor. The residue at position 286 (Thr-286) is a Phosphothreonine. At Ser-314 the chain carries Phosphoserine. The interval 315 to 354 (SKNPYKKPDGVKEPQTTVIHNPTDGNKESSESTNTTIEDE) is disordered. Residues 328–338 (PQTTVIHNPTD) show a composition bias toward polar residues. Thr-350 carries the phosphothreonine modification.

Belongs to the protein kinase superfamily. CAMK Ser/Thr protein kinase family. CaMK subfamily. In terms of assembly, CAMK2 is composed of four different chains: alpha, beta, gamma, and delta. The different isoforms assemble into homo- or heteromultimeric holoenzymes composed of 8 to 12 subunits. In terms of tissue distribution, first detected at the 18-somite stage where expression is restricted to somite boundaries. At 24 hpf, expression is elevated in epidermal tissue and in the hatching gland. After 24 hpf, expression dimishes, but persists at low levels along the dorsal trunk. At 48 hpf, expression is restricted at a low level to the forebrain. At 72 hpf, weak expression reappears along the entire dorsal trunk in discrete cell bodies.

It carries out the reaction L-seryl-[protein] + ATP = O-phospho-L-seryl-[protein] + ADP + H(+). The enzyme catalyses L-threonyl-[protein] + ATP = O-phospho-L-threonyl-[protein] + ADP + H(+). Autophosphorylation of CAMK2 plays an important role in the regulation of the kinase activity. Its function is as follows. CaM-kinase II (CAMK2) is a prominent kinase in the central nervous system. The chain is Calcium/calmodulin-dependent protein kinase type II delta 1 chain from Danio rerio (Zebrafish).